A 180-amino-acid chain; its full sequence is MDLPGPIRDILLVPLELGLILGGLEVVLLTNIIYSALSLGPVLVCISLLYILLNADFVAAAQILIYVGAVNVLIVFAVMLMNNQKYPNFVPLWTVGDGITLVVCTSLFCSLITIILNTSWSEISMTTKSNQILEQDLTNNVQRIGAHLSTDFFLPFELLSIILLVALVGAITIARREEIV.

Helical transmembrane passes span I10–T30, I32–L52, F57–A77, V95–I115, and F153–I173.

This sequence belongs to the complex I subunit 6 family. As to quaternary structure, NDH is composed of at least 16 different subunits, 5 of which are encoded in the nucleus.

Its subcellular location is the plastid. The protein resides in the chloroplast thylakoid membrane. The catalysed reaction is a plastoquinone + NADH + (n+1) H(+)(in) = a plastoquinol + NAD(+) + n H(+)(out). It catalyses the reaction a plastoquinone + NADPH + (n+1) H(+)(in) = a plastoquinol + NADP(+) + n H(+)(out). NDH shuttles electrons from NAD(P)H:plastoquinone, via FMN and iron-sulfur (Fe-S) centers, to quinones in the photosynthetic chain and possibly in a chloroplast respiratory chain. The immediate electron acceptor for the enzyme in this species is believed to be plastoquinone. Couples the redox reaction to proton translocation, and thus conserves the redox energy in a proton gradient. The protein is NAD(P)H-quinone oxidoreductase subunit 6, chloroplastic (ndhG) of Cycas taitungensis (Prince sago).